Reading from the N-terminus, the 147-residue chain is Protein-export protein SecB (147 aa).

It belongs to the SecB family. In terms of assembly, homotetramer, a dimer of dimers. One homotetramer interacts with 1 SecA dimer.

It is found in the cytoplasm. In terms of biological role, one of the proteins required for the normal export of preproteins out of the cell cytoplasm. It is a molecular chaperone that binds to a subset of precursor proteins, maintaining them in a translocation-competent state. It also specifically binds to its receptor SecA. The polypeptide is Protein-export protein SecB (Neisseria meningitidis serogroup C (strain 053442)).